We begin with the raw amino-acid sequence, 664 residues long: Methionine--tRNA ligase (664 aa).

The 'HIGH' region motif lies at 15-25; that stretch reads YYPSGKAHIGH. The short motif at 310–314 is the 'KMSKS' region element; that stretch reads KMSKS. An ATP-binding site is contributed by K313. Positions 563 to 664 constitute a tRNA-binding domain; the sequence is DFDKIDLRVA…SALPNGAKVK (102 aa).

Belongs to the class-I aminoacyl-tRNA synthetase family. MetG type 2B subfamily. As to quaternary structure, homodimer.

It localises to the cytoplasm. The enzyme catalyses tRNA(Met) + L-methionine + ATP = L-methionyl-tRNA(Met) + AMP + diphosphate. Is required not only for elongation of protein synthesis but also for the initiation of all mRNA translation through initiator tRNA(fMet) aminoacylation. The protein is Methionine--tRNA ligase (metG) of Listeria innocua serovar 6a (strain ATCC BAA-680 / CLIP 11262).